A 502-amino-acid polypeptide reads, in one-letter code: Alpha-ketoglutarate-dependent dioxygenase FTO (502 aa).

A fe2OG dioxygenase domain region spans residues 32–324; the sequence is TPKDDEFYQQ…SSTHRVAECS (293 aa). Substrate is bound by residues Arg96 and Tyr108. Asn202 provides a ligand contact to 2-oxoglutarate. The tract at residues 210–221 is loop L1; predicted to block binding of double-stranded DNA or RNA; the sequence is PYLKEEPYFGMG. Lys213 is subject to N6-acetyllysine. Positions 228 and 230 each coordinate Fe cation. 228-231 contributes to the substrate binding site; that stretch reads HHDE. Tyr292 is a binding site for 2-oxoglutarate. His304 lines the Fe cation pocket. 2-oxoglutarate contacts are provided by residues 313–315, Thr317, and Arg319; that span reads RFS.

It belongs to the fto family. As to quaternary structure, monomer. May also exist as homodimer. The cofactor is Fe(2+). In terms of tissue distribution, ubiquitous. Highly expressed in teeth and weakly in bone.

It is found in the nucleus. The protein localises to the nucleus speckle. It localises to the cytoplasm. The enzyme catalyses a 5'-end (N(7)-methyl 5'-triphosphoguanosine)-(N(6),2'-O-dimethyladenosine) in mRNA + 2-oxoglutarate + O2 = a 5'-end (N(7)-methyl 5'-triphosphoguanosine)-(2'-O-methyladenosine) in mRNA + formaldehyde + succinate + CO2. It carries out the reaction an N(6)-methyladenosine in mRNA + 2-oxoglutarate + O2 = an adenosine in mRNA + formaldehyde + succinate + CO2. The catalysed reaction is N(6)-methyladenosine in U6 snRNA + 2-oxoglutarate + O2 = adenosine in U6 snRNA + formaldehyde + succinate + CO2. It catalyses the reaction a 5'-end (N(7)-methyl 5'-triphosphoguanosine)-(N(6),2'-O-dimethyladenosine) in U6 snRNA + 2-oxoglutarate + O2 = a 5'-end (N(7)-methyl 5'-triphosphoguanosine)-(2'-O-methyladenosine) in U6 snRNA + formaldehyde + succinate + CO2. The enzyme catalyses an N(1)-methyladenosine in tRNA + 2-oxoglutarate + O2 = an adenosine in tRNA + formaldehyde + succinate + CO2. Activated by ascorbate. Inhibited by N-oxalylglycine, fumarate and succinate. Functionally, RNA demethylase that mediates oxidative demethylation of different RNA species, such as mRNAs, tRNAs and snRNAs, and acts as a regulator of fat mass, adipogenesis and energy homeostasis. Specifically demethylates N(6)-methyladenosine (m6A) RNA, the most prevalent internal modification of messenger RNA (mRNA) in higher eukaryotes. M6A demethylation by FTO affects mRNA expression and stability. Also able to demethylate m6A in U6 small nuclear RNA (snRNA). Mediates demethylation of N(6),2'-O-dimethyladenosine cap (m6A(m)), by demethylating the N(6)-methyladenosine at the second transcribed position of mRNAs and U6 snRNA. Demethylation of m6A(m) in the 5'-cap by FTO affects mRNA stability by promoting susceptibility to decapping. Also acts as a tRNA demethylase by removing N(1)-methyladenine from various tRNAs. Has no activity towards 1-methylguanine. Has no detectable activity towards double-stranded DNA. Also able to repair alkylated DNA and RNA by oxidative demethylation: demethylates single-stranded RNA containing 3-methyluracil, single-stranded DNA containing 3-methylthymine and has low demethylase activity towards single-stranded DNA containing 1-methyladenine or 3-methylcytosine. Ability to repair alkylated DNA and RNA is however unsure in vivo. Involved in the regulation of fat mass, adipogenesis and body weight, thereby contributing to the regulation of body size and body fat accumulation. Involved in the regulation of thermogenesis and the control of adipocyte differentiation into brown or white fat cells. Regulates activity of the dopaminergic midbrain circuitry via its ability to demethylate m6A in mRNAs. This is Alpha-ketoglutarate-dependent dioxygenase FTO from Rattus norvegicus (Rat).